Reading from the N-terminus, the 215-residue chain is KID-containing protein 1 (215 aa).

2 disordered regions span residues 1–132 (MAGG…NKKR) and 150–183 (NPKSMPLLPVHEDNDDEEGDDGDLSDEERGGDVL). The span at 64–81 (DSEEEDEESEEDNDEEEL) shows a compositional bias: acidic residues. Positions 129–137 (NKKRRLQIY) match the Nuclear localization signal motif. The span at 162-175 (DNDDEEGDDGDLSD) shows a compositional bias: acidic residues. The interval 177–204 (ERGGDVLARRPSFKNRALKSMSCFALSD) is kinase-inducible domain (KID). A Phosphoserine; by PKA modification is found at Ser-188.

As to quaternary structure, interacts with HDA19; Ser-188 is critical for this interaction. As to expression, strongly expressed in stems, flowers, roots and immature siliques, but not detected in leaf blades of seedlings.

It is found in the nucleus. Its function is as follows. Transcription activator which may regulates gene expression through interaction with the histone deacetylase HDA19. The sequence is that of KID-containing protein 1 from Brassica napus (Rape).